A 257-amino-acid polypeptide reads, in one-letter code: Phosphatidylglycerol--prolipoprotein diacylglyceryl transferase (257 aa).

A run of 7 helical transmembrane segments spans residues 13-33, 49-69, 88-108, 123-143, 152-172, 185-202, and 223-243; these read IGPI…AIGG, FLLN…RLMF, IYEG…AGLY, FAVL…IFNQ, FAFG…ILLI, GYQF…RGLI, and IGFF…AYWM. A 1,2-diacyl-sn-glycero-3-phospho-(1'-sn-glycerol) is bound at residue Arg136.

It belongs to the Lgt family.

It localises to the cell membrane. It carries out the reaction L-cysteinyl-[prolipoprotein] + a 1,2-diacyl-sn-glycero-3-phospho-(1'-sn-glycerol) = an S-1,2-diacyl-sn-glyceryl-L-cysteinyl-[prolipoprotein] + sn-glycerol 1-phosphate + H(+). The protein operates within protein modification; lipoprotein biosynthesis (diacylglyceryl transfer). Its function is as follows. Catalyzes the transfer of the diacylglyceryl group from phosphatidylglycerol to the sulfhydryl group of the N-terminal cysteine of a prolipoprotein, the first step in the formation of mature lipoproteins. The chain is Phosphatidylglycerol--prolipoprotein diacylglyceryl transferase from Thermoanaerobacter pseudethanolicus (strain ATCC 33223 / 39E) (Clostridium thermohydrosulfuricum).